Consider the following 104-residue polypeptide: NADH-quinone oxidoreductase subunit K (104 aa).

Helical transmembrane passes span 4–24 (VAYYLVLSAILFSIGVGAFLI), 28–48 (IITIFMSIELMLNAVNLSFVA), and 64–84 (IFVFFVMVVAAAEAAVGLAII).

Belongs to the complex I subunit 4L family. NDH-1 is composed of 14 different subunits. Subunits NuoA, H, J, K, L, M, N constitute the membrane sector of the complex.

Its subcellular location is the cell inner membrane. The enzyme catalyses a quinone + NADH + 5 H(+)(in) = a quinol + NAD(+) + 4 H(+)(out). Functionally, NDH-1 shuttles electrons from NADH, via FMN and iron-sulfur (Fe-S) centers, to quinones in the respiratory chain. The immediate electron acceptor for the enzyme in this species is believed to be ubiquinone. Couples the redox reaction to proton translocation (for every two electrons transferred, four hydrogen ions are translocated across the cytoplasmic membrane), and thus conserves the redox energy in a proton gradient. This is NADH-quinone oxidoreductase subunit K from Acidobacterium capsulatum (strain ATCC 51196 / DSM 11244 / BCRC 80197 / JCM 7670 / NBRC 15755 / NCIMB 13165 / 161).